Consider the following 347-residue polypeptide: Dihydroorotate dehydrogenase (quinone) (347 aa).

FMN is bound by residues 65 to 69 and Thr89; that span reads AGLDK. Residue Lys69 coordinates substrate. 114-118 is a substrate binding site; the sequence is NRMGF. FMN contacts are provided by Asn146 and Asn179. Asn179 provides a ligand contact to substrate. Ser182 serves as the catalytic Nucleophile. Residue Asn184 participates in substrate binding. The FMN site is built by Lys224 and Thr252. 253-254 serves as a coordination point for substrate; it reads NT. FMN is bound by residues Gly275, Gly304, and 325–326; that span reads YT.

The protein belongs to the dihydroorotate dehydrogenase family. Type 2 subfamily. In terms of assembly, monomer. It depends on FMN as a cofactor.

It localises to the cell membrane. It carries out the reaction (S)-dihydroorotate + a quinone = orotate + a quinol. It functions in the pathway pyrimidine metabolism; UMP biosynthesis via de novo pathway; orotate from (S)-dihydroorotate (quinone route): step 1/1. Catalyzes the conversion of dihydroorotate to orotate with quinone as electron acceptor. This is Dihydroorotate dehydrogenase (quinone) from Herminiimonas arsenicoxydans.